Here is a 561-residue protein sequence, read N- to C-terminus: MYKVVVIIALLGAVKGLDRICLGHHAVANGTIVKTLTNEQEEVTNATETVESTNLNKLCMKGRSYKDLGNCHPVGMLIGTPVCDPHLTGTWDTLIERENAIAHCYPGATINEEALRQKIMESGGISKMSTGFTYGSSITSAGTTKACMRNGGDSFYAELKWLVSKTKGQNFPQTTNTYRNTDTAEHLIIWGIHHPSSTQEKNDLYGTQSLSISVESSTYQNNFVPVVGARPQVNGQSGRIDFHWTLVQPGDNITFSDNGGLIAPSRVSKLTGRDLGIQSEALIDNSCESKCFWRGGSINTKLPFQNLSPRTVGQCPKYVNQRSLLLATGMRNVPEVVQGRGLFGAIAGFIENGWEGMVDGWYGFRHQNAQGTGQAADYKSTQAAIDQITGKLNRLIEKTNTEFESIESEFSETEHQIGNVINWTKDSITDIWTYNAELLVAMENQHTIDMADSEMLNLYERVRKQLRQNAEEDGKGCFEIYHTCDDSCMESIRNNTYDHSQYREEALLNRLNINPVKLSSGYKDIILWFSFGESCFVLLAVVMGLVFFCLKNGNMRCTICI.

A signal peptide spans 1–16 (MYKVVVIIALLGAVKG). The Extracellular portion of the chain corresponds to 18-524 (DRICLGHHAV…PVKLSSGYKD (507 aa)). 6 cysteine pairs are disulfide-bonded: C21–C477, C59–C287, C71–C83, C104–C147, C291–C315, and C484–C488. N-linked (GlcNAc...) asparagine; by host glycosylation is found at N29 and N45. N-linked (GlcNAc...) asparagine; by host glycosylation is present at N252. N422 carries N-linked (GlcNAc...) asparagine; by host glycosylation. The N-linked (GlcNAc...) asparagine; by host glycan is linked to N494. The chain crosses the membrane as a helical span at residues 525 to 545 (IILWFSFGESCFVLLAVVMGL). At 546 to 561 (VFFCLKNGNMRCTICI) the chain is on the cytoplasmic side. Residues C557 and C560 are each lipidated (S-palmitoyl cysteine; by host).

It belongs to the influenza viruses hemagglutinin family. Homotrimer of disulfide-linked HA1-HA2. Post-translationally, palmitoylated. In terms of processing, in natural infection, inactive HA is matured into HA1 and HA2 outside the cell by one or more trypsin-like, arginine-specific endoprotease secreted by the bronchial epithelial cells. One identified protease that may be involved in this process is secreted in lungs by club cells.

The protein localises to the virion membrane. It is found in the host apical cell membrane. Its function is as follows. Binds to sialic acid-containing receptors on the cell surface, bringing about the attachment of the virus particle to the cell. This attachment induces virion internalization of about two third of the virus particles through clathrin-dependent endocytosis and about one third through a clathrin- and caveolin-independent pathway. Plays a major role in the determination of host range restriction and virulence. Class I viral fusion protein. Responsible for penetration of the virus into the cell cytoplasm by mediating the fusion of the membrane of the endocytosed virus particle with the endosomal membrane. Low pH in endosomes induces an irreversible conformational change in HA2, releasing the fusion hydrophobic peptide. Several trimers are required to form a competent fusion pore. Binds to sialic acid-containing receptors on the cell surface, bringing about the attachment of the virus particle to the cell. This attachment induces virion internalization either through clathrin-dependent endocytosis or through clathrin- and caveolin-independent pathway. Plays a major role in the determination of host range restriction and virulence. Class I viral fusion protein. Responsible for penetration of the virus into the cell cytoplasm by mediating the fusion of the membrane of the endocytosed virus particle with the endosomal membrane. Low pH in endosomes induces an irreversible conformational change in HA2, releasing the fusion hydrophobic peptide. Several trimers are required to form a competent fusion pore. The polypeptide is Hemagglutinin (Aves).